Here is a 141-residue protein sequence, read N- to C-terminus: Pancreatic progenitor cell differentiation and proliferation factor-like protein (141 aa).

The tract at residues 72-141 (DQSACGGNGP…GAPKDTNSPQ (70 aa)) is disordered. The span at 95-105 (SLLQQEESQLL) shows a compositional bias: low complexity. Over residues 112-122 (GTVNRFRNSQT) the composition is skewed to polar residues.

Belongs to the PPDPF family.

This Bos taurus (Bovine) protein is Pancreatic progenitor cell differentiation and proliferation factor-like protein.